Here is a 487-residue protein sequence, read N- to C-terminus: Chromosomal replication initiator protein DnaA (487 aa).

The segment at 1-71 is domain I, interacts with DnaA modulators; it reads MMHDALFERF…TSLVQSEDPD (71 aa). Positions 71–141 are domain II; sequence DVLKVEILVR…QGGSGPLFGS (71 aa). The interval 142-364 is domain III, AAA+ region; the sequence is PLDTRFTFDT…GAFNQLMFRR (223 aa). Residues glycine 188, glycine 190, lysine 191, and threonine 192 each contribute to the ATP site. Positions 365–487 are domain IV, binds dsDNA; it reads SFEPNLSVDR…LKRLINENNA (123 aa).

The protein belongs to the DnaA family. As to quaternary structure, oligomerizes as a right-handed, spiral filament on DNA at oriC.

It is found in the cytoplasm. Its function is as follows. Plays an essential role in the initiation and regulation of chromosomal replication. ATP-DnaA binds to the origin of replication (oriC) to initiate formation of the DNA replication initiation complex once per cell cycle. Binds the DnaA box (a 9 base pair repeat at the origin) and separates the double-stranded (ds)DNA. Forms a right-handed helical filament on oriC DNA; dsDNA binds to the exterior of the filament while single-stranded (ss)DNA is stabiized in the filament's interior. The ATP-DnaA-oriC complex binds and stabilizes one strand of the AT-rich DNA unwinding element (DUE), permitting loading of DNA polymerase. After initiation quickly degrades to an ADP-DnaA complex that is not apt for DNA replication. Binds acidic phospholipids. The chain is Chromosomal replication initiator protein DnaA from Agrobacterium fabrum (strain C58 / ATCC 33970) (Agrobacterium tumefaciens (strain C58)).